The chain runs to 367 residues: Heme A synthase (367 aa).

5 consecutive transmembrane segments (helical) span residues 26 to 46 (IRGW…VGGA), 111 to 131 (LLAR…WVTG), 139 to 159 (LPLL…WWMV), 174 to 194 (LATH…IYRG), and 212 to 232 (AGAI…VAGL). Heme is bound at residue His274. Helical transmembrane passes span 276–296 (LGAY…LRAA), 305–325 (SVLL…TLLL), and 327–347 (VPIG…GFAI). His335 lines the heme pocket.

The protein belongs to the COX15/CtaA family. Type 2 subfamily. As to quaternary structure, interacts with CtaB. It depends on heme b as a cofactor.

The protein resides in the cell membrane. The catalysed reaction is Fe(II)-heme o + 2 A + H2O = Fe(II)-heme a + 2 AH2. It participates in porphyrin-containing compound metabolism; heme A biosynthesis; heme A from heme O: step 1/1. In terms of biological role, catalyzes the conversion of heme O to heme A by two successive hydroxylations of the methyl group at C8. The first hydroxylation forms heme I, the second hydroxylation results in an unstable dihydroxymethyl group, which spontaneously dehydrates, resulting in the formyl group of heme A. The polypeptide is Heme A synthase (Rhizobium meliloti (strain 1021) (Ensifer meliloti)).